A 330-amino-acid polypeptide reads, in one-letter code: Ferredoxin--NADP reductase (330 aa).

Threonine 18, glutamate 37, glutamine 45, tyrosine 50, valine 90, phenylalanine 124, aspartate 286, and threonine 327 together coordinate FAD.

It belongs to the ferredoxin--NADP reductase type 2 family. In terms of assembly, homodimer. It depends on FAD as a cofactor.

It carries out the reaction 2 reduced [2Fe-2S]-[ferredoxin] + NADP(+) + H(+) = 2 oxidized [2Fe-2S]-[ferredoxin] + NADPH. In Halalkalibacterium halodurans (strain ATCC BAA-125 / DSM 18197 / FERM 7344 / JCM 9153 / C-125) (Bacillus halodurans), this protein is Ferredoxin--NADP reductase.